The sequence spans 101 residues: Putative pterin-4-alpha-carbinolamine dehydratase (101 aa).

This sequence belongs to the pterin-4-alpha-carbinolamine dehydratase family.

It catalyses the reaction (4aS,6R)-4a-hydroxy-L-erythro-5,6,7,8-tetrahydrobiopterin = (6R)-L-erythro-6,7-dihydrobiopterin + H2O. The chain is Putative pterin-4-alpha-carbinolamine dehydratase from Rhodopseudomonas palustris (strain BisB18).